The following is a 417-amino-acid chain: Tyrosine--tRNA ligase (417 aa).

L-tyrosine is bound at residue Tyr-39. The 'HIGH' region signature appears at 44–53 (CTARSLHIGN). L-tyrosine contacts are provided by Tyr-176 and Gln-180. The short motif at 236 to 240 (KMGKT) is the 'KMSKS' region element. Position 239 (Lys-239) interacts with ATP. One can recognise an S4 RNA-binding domain in the interval 350–417 (FGVLNAFVKA…KKKHILIKPA (68 aa)).

This sequence belongs to the class-I aminoacyl-tRNA synthetase family. TyrS type 1 subfamily. In terms of assembly, homodimer.

It is found in the cytoplasm. The enzyme catalyses tRNA(Tyr) + L-tyrosine + ATP = L-tyrosyl-tRNA(Tyr) + AMP + diphosphate + H(+). In terms of biological role, catalyzes the attachment of tyrosine to tRNA(Tyr) in a two-step reaction: tyrosine is first activated by ATP to form Tyr-AMP and then transferred to the acceptor end of tRNA(Tyr). The chain is Tyrosine--tRNA ligase from Bradyrhizobium diazoefficiens (strain JCM 10833 / BCRC 13528 / IAM 13628 / NBRC 14792 / USDA 110).